The following is a 297-amino-acid chain: Ribosomal RNA small subunit methyltransferase H (297 aa).

Residues 37-39 (GGH), Glu56, Phe87, Asp102, and His109 each bind S-adenosyl-L-methionine.

It belongs to the methyltransferase superfamily. RsmH family.

It localises to the cytoplasm. The enzyme catalyses cytidine(1402) in 16S rRNA + S-adenosyl-L-methionine = N(4)-methylcytidine(1402) in 16S rRNA + S-adenosyl-L-homocysteine + H(+). Specifically methylates the N4 position of cytidine in position 1402 (C1402) of 16S rRNA. The chain is Ribosomal RNA small subunit methyltransferase H from Borrelia hermsii (strain HS1 / DAH).